Here is a 1342-residue protein sequence, read N- to C-terminus: DNA-directed RNA polymerase subunit beta (1342 aa).

Belongs to the RNA polymerase beta chain family. As to quaternary structure, the RNAP catalytic core consists of 2 alpha, 1 beta, 1 beta' and 1 omega subunit. When a sigma factor is associated with the core the holoenzyme is formed, which can initiate transcription.

It carries out the reaction RNA(n) + a ribonucleoside 5'-triphosphate = RNA(n+1) + diphosphate. DNA-dependent RNA polymerase catalyzes the transcription of DNA into RNA using the four ribonucleoside triphosphates as substrates. This chain is DNA-directed RNA polymerase subunit beta, found in Cronobacter sakazakii (strain ATCC BAA-894) (Enterobacter sakazakii).